A 78-amino-acid chain; its full sequence is Small outer capsid protein (78 aa).

This sequence belongs to the Tevenvirinae Soc family. Homotrimer. Interacts with the major capsid protein; three soc molecules associate with each interface between the major capsid protein facets.

The protein localises to the virion. In terms of biological role, capsid decoration protein which helps to stabilize the capsid against extremes of pH and temperature. Once maturation and expansion of the capsid has occured, trimers of soc attach the interfaces between the hexamer of the major capsid protein. Acts as a 'glue' between neighboring hexameric capsomers. Dispensable for the head morphogenesis and phage infection. This Escherichia phage RB69 (Bacteriophage RB69) protein is Small outer capsid protein.